The chain runs to 122 residues: Phosphoribosyl-ATP pyrophosphatase (122 aa).

Belongs to the PRA-PH family.

It is found in the cytoplasm. It catalyses the reaction 1-(5-phospho-beta-D-ribosyl)-ATP + H2O = 1-(5-phospho-beta-D-ribosyl)-5'-AMP + diphosphate + H(+). It participates in amino-acid biosynthesis; L-histidine biosynthesis; L-histidine from 5-phospho-alpha-D-ribose 1-diphosphate: step 2/9. This chain is Phosphoribosyl-ATP pyrophosphatase, found in Burkholderia mallei (strain NCTC 10247).